A 254-amino-acid polypeptide reads, in one-letter code: tRNA pseudouridine synthase A (254 aa).

Asp52 functions as the Nucleophile in the catalytic mechanism. Tyr111 is a binding site for substrate.

This sequence belongs to the tRNA pseudouridine synthase TruA family. Homodimer.

The catalysed reaction is uridine(38/39/40) in tRNA = pseudouridine(38/39/40) in tRNA. Its function is as follows. Formation of pseudouridine at positions 38, 39 and 40 in the anticodon stem and loop of transfer RNAs. The chain is tRNA pseudouridine synthase A from Methylobacterium nodulans (strain LMG 21967 / CNCM I-2342 / ORS 2060).